The chain runs to 419 residues: Transcription termination factor Rho (419 aa).

The 76-residue stretch at 48–123 (EISGDGVLEI…LKVDTINFDR (76 aa)) folds into the Rho RNA-BD domain. RNA-binding regions lie at residues 61-66 (GFGFLR), 78-80 (DIY), and 108-110 (ERY). ATP contacts are provided by residues 169 to 174 (GKGQRG), 181 to 186 (KAGKTI), and Arg-212. Residues 284–288 (VLTGG) are RNA-binding 2.

The protein belongs to the Rho family. Homohexamer. The homohexamer assembles into an open ring structure.

Functionally, facilitates transcription termination by a mechanism that involves Rho binding to the nascent RNA, activation of Rho's RNA-dependent ATPase activity, and release of the mRNA from the DNA template. The chain is Transcription termination factor Rho from Pseudomonas fluorescens biotype C.